A 478-amino-acid polypeptide reads, in one-letter code: UDP-N-acetylmuramate--L-alanine ligase (478 aa).

122 to 128 (GTHGKTT) contacts ATP.

It belongs to the MurCDEF family.

The protein resides in the cytoplasm. The enzyme catalyses UDP-N-acetyl-alpha-D-muramate + L-alanine + ATP = UDP-N-acetyl-alpha-D-muramoyl-L-alanine + ADP + phosphate + H(+). It participates in cell wall biogenesis; peptidoglycan biosynthesis. Functionally, cell wall formation. This Stenotrophomonas maltophilia (strain R551-3) protein is UDP-N-acetylmuramate--L-alanine ligase.